A 235-amino-acid polypeptide reads, in one-letter code: Small ribosomal subunit protein uS3 (235 aa).

The 69-residue stretch at 39-107 (VRKFLNKELA…PAQINIAEVK (69 aa)) folds into the KH type-2 domain. Positions 215-235 (AQSEQQPADKPKKAPRGKGRK) are disordered.

It belongs to the universal ribosomal protein uS3 family. As to quaternary structure, part of the 30S ribosomal subunit. Forms a tight complex with proteins S10 and S14.

Binds the lower part of the 30S subunit head. Binds mRNA in the 70S ribosome, positioning it for translation. This Haemophilus influenzae (strain ATCC 51907 / DSM 11121 / KW20 / Rd) protein is Small ribosomal subunit protein uS3.